The sequence spans 384 residues: Sphingosine kinase 1 (384 aa).

A DAGKc domain is found at 12–159 (PRPCRVLVLL…MNLLSLHTAS (148 aa)). ATP-binding positions include 22 to 24 (NPR) and 54 to 58 (TERRN). Residue 79 to 82 (SGDG) coordinates substrate. Catalysis depends on Asp81, which acts as the Proton donor/acceptor. ATP-binding positions include Glu86 and 111–113 (GSG). 2 consecutive short sequence motifs (nuclear export signal) follow at residues 147–155 (LSPMNLLSL) and 161–169 (LRLFSVLSL). Asp178 contacts substrate. ATP-binding residues include Arg185 and Arg191. Thr193 carries the post-translational modification Phosphothreonine. Ser225 is subject to Phosphoserine. 341–343 (DGE) serves as a coordination point for ATP.

As to quaternary structure, interacts with ACY1. Binds to calmodulin. Interacts with SPHKAP. Interacts with CIB1, the interaction occurs in a calcium-dependent manner. Interacts with TRAF2. Interacts with EEF1A1; the interaction enhances SPHK1 kinase activity. Mg(2+) is required as a cofactor. As to expression, widely expressed with highest levels in adult liver, kidney, heart and skeletal muscle. Expressed in brain cortex (at protein level).

Its subcellular location is the cytoplasm. It localises to the nucleus. It is found in the cell membrane. The protein resides in the endosome membrane. The protein localises to the membrane. Its subcellular location is the clathrin-coated pit. It localises to the synapse. The catalysed reaction is a sphingoid base + ATP = a sphingoid 1-phosphate + ADP + H(+). The enzyme catalyses L-seryl-[protein] + acetyl-CoA = O-acetyl-L-seryl-[protein] + CoA. It catalyses the reaction sphinganine + ATP = sphinganine 1-phosphate + ADP + H(+). It carries out the reaction sphing-4-enine + ATP = sphing-4-enine 1-phosphate + ADP + H(+). The catalysed reaction is 1-O-hexadecyl-2-amino-sn-glycerol + ATP = 1-O-hexadecyl-2-desoxy-2-amino-sn-glycero-3-phosphate + ADP + H(+). Its activity is regulated as follows. Acetyltransferase activity increases in presence of the kinase substrate, sphingosine. In Purkinje cells, kinase activity on sphingosine increases in presence of VEGFA. In neurons, kinase activity increases during the first 24h in presence of Amyloid-beta protein 42 to decrease after 96h. In terms of biological role, catalyzes the phosphorylation of sphingosine to form sphingosine 1-phosphate (SPP), a lipid mediator with both intra- and extracellular functions. Also acts on D-erythro-sphingosine and to a lesser extent sphinganine, but not other lipids, such as D,L-threo-dihydrosphingosine, N,N-dimethylsphingosine, diacylglycerol, ceramide, or phosphatidylinositol. In contrast to proapoptotic SPHK2, has a negative effect on intracellular ceramide levels, enhances cell growth and inhibits apoptosis. Involved in the regulation of inflammatory response and neuroinflammation. Via the product sphingosine 1-phosphate, stimulates TRAF2 E3 ubiquitin ligase activity, and promotes activation of NF-kappa-B in response to TNF signaling leading to IL17 secretion. In response to TNF and in parallel to NF-kappa-B activation, negatively regulates RANTES induction through p38 MAPK signaling pathway. Involved in endocytic membrane trafficking induced by sphingosine, recruited to dilate endosomes, also plays a role on later stages of endosomal maturation and membrane fusion independently of its kinase activity. In Purkinje cells, seems to be also involved in the regulation of autophagosome-lysosome fusion upon VEGFA. Has serine acetyltransferase activity on PTGS2/COX2 in an acetyl-CoA dependent manner. The acetyltransferase activity increases in presence of the kinase substrate, sphingosine. During neuroinflammation, through PTGS2 acetylation, promotes neuronal secretion of specialized preresolving mediators (SPMs), especially 15-R-lipoxin A4, which results in an increase of phagocytic microglia. This Homo sapiens (Human) protein is Sphingosine kinase 1.